The sequence spans 713 residues: Meiotic activator RIM4 (713 aa).

The interval 1–90 is disordered; sequence MKTEISTADS…TSTSTESRGR (90 aa). The span at 21–31 shows a compositional bias: basic and acidic residues; the sequence is ADSELVIREDI. The span at 50–71 shows a compositional bias: acidic residues; the sequence is GEDSDTDSDNFLQDPEDDVDEE. Positions 74-90 are enriched in low complexity; that stretch reads GRGTVTTTSTSTESRGR. The RRM 1 domain maps to 93–172; the sequence is SCIFVASLAA…RRLRCEPAKV (80 aa). Residues 276 to 337 are disordered; that stretch reads HQNNGIINND…SDGIYDDEDK (62 aa). The span at 278 to 298 shows a compositional bias: low complexity; it reads NNGIINNDGSNNNDNNNSNNN. Basic and acidic residues predominate over residues 299–327; that stretch reads NREDSRRNGDVIEEECGHVHGSDSEEKLT. The RRM 2 domain maps to 346-420; sequence RSIFVGQLDK…KTMHVQYKEV (75 aa). Residues 524–609 form a disordered region; it reads KSMPNSWSSP…KRYARRSSYG (86 aa). Residue serine 525 is modified to Phosphoserine. A compositionally biased stretch (low complexity) spans 526 to 546; that stretch reads MPNSWSSPSSKSVNSENESVN. Over residues 563 to 574 the composition is skewed to polar residues; that stretch reads GRYNAANSFTTY. Over residues 575–594 the composition is skewed to low complexity; that stretch reads NNSSAGNSNNNNNNNNSNSN.

In terms of processing, polyubiquitinated by RSP5.

Its function is as follows. Positive regulator of sporulation-specific genes and of sporulation. Required for premeiotic DNA synthesis and meiotic chromosomal segregation. May act in a nutritional signaling pathway. The chain is Meiotic activator RIM4 (RIM4) from Saccharomyces cerevisiae (strain ATCC 204508 / S288c) (Baker's yeast).